Reading from the N-terminus, the 116-residue chain is Large ribosomal subunit protein uL18 (116 aa).

Belongs to the universal ribosomal protein uL18 family. As to quaternary structure, part of the 50S ribosomal subunit; part of the 5S rRNA/L5/L18/L25 subcomplex. Contacts the 5S and 23S rRNAs.

Functionally, this is one of the proteins that bind and probably mediate the attachment of the 5S RNA into the large ribosomal subunit, where it forms part of the central protuberance. The sequence is that of Large ribosomal subunit protein uL18 from Shewanella woodyi (strain ATCC 51908 / MS32).